A 618-amino-acid polypeptide reads, in one-letter code: DNA mismatch repair protein MutL (618 aa).

Over residues 367–381 (EPTAAREPATPRYSG) the composition is skewed to low complexity. A disordered region spans residues 367-402 (EPTAAREPATPRYSGGASGGNGGRQSAGGWPHAQPG). Gly residues predominate over residues 382-392 (GASGGNGGRQS).

This sequence belongs to the DNA mismatch repair MutL/HexB family.

Its function is as follows. This protein is involved in the repair of mismatches in DNA. It is required for dam-dependent methyl-directed DNA mismatch repair. May act as a 'molecular matchmaker', a protein that promotes the formation of a stable complex between two or more DNA-binding proteins in an ATP-dependent manner without itself being part of a final effector complex. The chain is DNA mismatch repair protein MutL from Salmonella heidelberg (strain SL476).